The following is a 98-amino-acid chain: NADH-ubiquinone oxidoreductase chain 4L (98 aa).

3 helical membrane-spanning segments follow: residues 1-21 (MIPT…GMLI), 29-49 (SLLC…LIAL), and 61-81 (IILL…LVSI).

The protein belongs to the complex I subunit 4L family. Core subunit of respiratory chain NADH dehydrogenase (Complex I) which is composed of 45 different subunits.

The protein localises to the mitochondrion inner membrane. The enzyme catalyses a ubiquinone + NADH + 5 H(+)(in) = a ubiquinol + NAD(+) + 4 H(+)(out). Its function is as follows. Core subunit of the mitochondrial membrane respiratory chain NADH dehydrogenase (Complex I) which catalyzes electron transfer from NADH through the respiratory chain, using ubiquinone as an electron acceptor. Part of the enzyme membrane arm which is embedded in the lipid bilayer and involved in proton translocation. This is NADH-ubiquinone oxidoreductase chain 4L (MT-ND4L) from Macaca ochreata (Booted macaque).